The primary structure comprises 153 residues: Endoribonuclease YbeY (153 aa).

Residues His118, His122, and His128 each contribute to the Zn(2+) site.

Belongs to the endoribonuclease YbeY family. The cofactor is Zn(2+).

Its subcellular location is the cytoplasm. Single strand-specific metallo-endoribonuclease involved in late-stage 70S ribosome quality control and in maturation of the 3' terminus of the 16S rRNA. The sequence is that of Endoribonuclease YbeY from Clostridioides difficile (strain 630) (Peptoclostridium difficile).